Consider the following 21-residue polypeptide: Apolipophorin 2 (21 aa).

Expressed in hemolymph.

It localises to the secreted. Functionally, constitutes the major component of lipophorin, which mediates transport for various types of lipids in hemolymph. Acts by forming lipoprotein particles that bind lipoproteins and lipids. The chain is Apolipophorin 2 from Galleria mellonella (Greater wax moth).